Here is a 268-residue protein sequence, read N- to C-terminus: Protein limb expression 1 homolog (268 aa).

The protein belongs to the LIX1 family. In terms of assembly, interacts with ft (via intracellular domain) and ds (via intracellular domain).

Its subcellular location is the apical cell membrane. It is found in the cytoplasm. In terms of biological role, component of the Fat (ft) signaling pathway that functions in normal development of various organs such as the wing and leg. In developing imaginal disks, involved in regulating both the protein levels and apical localization of ft and ds. Involved in establishing planar cell polarity (PCP) along the anterior-posterior axis of the wing (the early Fz signaling event), probably by acting upstream of ds and ft to regulate Fz activity. The protein is Protein limb expression 1 homolog of Drosophila melanogaster (Fruit fly).